The primary structure comprises 232 residues: Large ribosomal subunit protein uL1 (232 aa).

The protein belongs to the universal ribosomal protein uL1 family. In terms of assembly, part of the 50S ribosomal subunit.

Its function is as follows. Binds directly to 23S rRNA. The L1 stalk is quite mobile in the ribosome, and is involved in E site tRNA release. In terms of biological role, protein L1 is also a translational repressor protein, it controls the translation of the L11 operon by binding to its mRNA. This is Large ribosomal subunit protein uL1 from Sinorhizobium medicae (strain WSM419) (Ensifer medicae).